Here is a 95-residue protein sequence, read N- to C-terminus: MSSGGLLLLLGLLTLWAELTPVSSQDRPKFCYLPADPAECNAYMPRFYYDSASNKCKEFIYGGCRGNANNFKNRAECRHTCVASRKGIQPRIASN.

The signal sequence occupies residues M1–S24. Q25 bears the Pyrrolidone carboxylic acid mark. Residues C31–C81 enclose the BPTI/Kunitz inhibitor domain. Intrachain disulfides connect C31-C81, C40-C64, and C56-C77. The interval R65 to N67 is responsible for the anti-cancer effect. A propeptide spanning residues I92–N95 is cleaved from the precursor.

It belongs to the venom Kunitz-type family. As to quaternary structure, monomer. In terms of tissue distribution, expressed by the venom gland.

The protein resides in the secreted. Serine protease inhibitor that inhibits trypsin. Exhibits an anti-tumor effect and displays integrin inhibitory activity without being cytotoxic. Is able to dose-dependently inhibit the adhesion, migration and invasion of human glioblastoma U87 cells. Also impairs the function of alpha-v/beta-3 (ITGAV/ITGB3) and to a lesser extent, the activity of alpha-v/beta-6 (ITGAV/ITGB6), alpha-v/beta-5 (ITGAV/ITGB5), alpha-1/beta-1 (ITGA1/ITGB1) and alpha-5/beta-1 (ITGA5/ITGB1) integrins. The polypeptide is Kunitz-type serine protease inhibitor PIVL (Macrovipera lebetina transmediterranea (Blunt-nosed viper)).